The following is a 261-amino-acid chain: 5'-nucleotidase SurE (261 aa).

A divalent metal cation contacts are provided by D8, D9, S40, and N94.

This sequence belongs to the SurE nucleotidase family. A divalent metal cation is required as a cofactor.

The protein localises to the cytoplasm. It catalyses the reaction a ribonucleoside 5'-phosphate + H2O = a ribonucleoside + phosphate. Its function is as follows. Nucleotidase that shows phosphatase activity on nucleoside 5'-monophosphates. This is 5'-nucleotidase SurE from Anaplasma marginale (strain Florida).